Here is a 103-residue protein sequence, read N- to C-terminus: Large ribosomal subunit protein bL21 (103 aa).

The protein belongs to the bacterial ribosomal protein bL21 family. As to quaternary structure, part of the 50S ribosomal subunit. Contacts protein L20.

Its function is as follows. This protein binds to 23S rRNA in the presence of protein L20. The chain is Large ribosomal subunit protein bL21 from Burkholderia mallei (strain NCTC 10247).